A 268-amino-acid chain; its full sequence is MNQLKIAVAGASGRMGHMLIETILEAQDATLTGALDIAASPAVGSDAAAFLGKPAGVLIESDFAKGLANSEFLIDFTRPEGTLQHLEYCAAHNIKMIIGTTGFDAAGKAAIAAAAEKTAIMFAPNMSVGVNVTMKLLEMAAKNFSEGYDIEIIEAHHRHKVDAPSGTAIKMGEVIAGALGKELNDVAVWAREGVTGARDPSSIGFATVRGGDIIGDHTVLFAGIGERIEISHKSSSRVSYAHGSLRAARFLADKKTGLYDMQDVLGLR.

Residues 10–15 (GASGRM), D36, 99–101 (GTT), and 123–126 (APNM) each bind NAD(+). Residue H156 is the Proton donor/acceptor of the active site. H157 provides a ligand contact to (S)-2,3,4,5-tetrahydrodipicolinate. K160 functions as the Proton donor in the catalytic mechanism. 166–167 (GT) contacts (S)-2,3,4,5-tetrahydrodipicolinate.

The protein belongs to the DapB family.

The protein resides in the cytoplasm. It carries out the reaction (S)-2,3,4,5-tetrahydrodipicolinate + NAD(+) + H2O = (2S,4S)-4-hydroxy-2,3,4,5-tetrahydrodipicolinate + NADH + H(+). It catalyses the reaction (S)-2,3,4,5-tetrahydrodipicolinate + NADP(+) + H2O = (2S,4S)-4-hydroxy-2,3,4,5-tetrahydrodipicolinate + NADPH + H(+). The protein operates within amino-acid biosynthesis; L-lysine biosynthesis via DAP pathway; (S)-tetrahydrodipicolinate from L-aspartate: step 4/4. Catalyzes the conversion of 4-hydroxy-tetrahydrodipicolinate (HTPA) to tetrahydrodipicolinate. This Janthinobacterium sp. (strain Marseille) (Minibacterium massiliensis) protein is 4-hydroxy-tetrahydrodipicolinate reductase.